The chain runs to 453 residues: Protein vestigial (453 aa).

Positions 145–279 (AAGHSLHSSH…GGGLAGSGQG (135 aa)) are disordered. A compositionally biased stretch (basic residues) spans 151–177 (HSSHRTHAHSLAHAHTHPHSHTHTHTH). The segment covering 178-193 (QTKEEDLIVPRSEAEA) has biased composition (basic and acidic residues). 2 stretches are compositionally biased toward gly residues: residues 227–253 (HGGGGATGGPSSAGGTGSGGGDGGGTG) and 267–278 (GSGGGGLAGSGQ). Residues 279–335 (GQAQYLSASCVVFTNYSGDTASQVDEHFSRALNYNNKDSKESSSPMSNRNFPPSFWN) are ser-rich sd binding domain.

In terms of assembly, the Ser-rich protein domain within the C-terminal region interacts with the C-terminus of sd to form a complex which acts as a selector for wing development. Interacts with Dhfr. In terms of tissue distribution, expressed in the developing wing primordia initially along the D/V wing boundary, and by the late third larval instar, maximal expression is seen in cells at the D/V wing disk boundary. Less expression is seen in cells located farther from this boundary.

It localises to the nucleus. Its function is as follows. Involved in determining which thoracic imaginal disk cells will form wings and halteres, perhaps by interacting with other nuclear regulatory proteins. When in combination with scalloped (sd), it acts as a transcriptional activation complex that regulates gene expression in the wing. Binding to sd switches the DNA target selectivity of sd. Required and sufficient for cell proliferation at the dorsal/ventral (D/V) boundary of the wing imaginal disk. Also required for cell proliferation in the wing imaginal disk, mediated via activation of E2f. By interacting with Dhfr, may control genes involved in DNA replication. The chain is Protein vestigial (vg) from Drosophila melanogaster (Fruit fly).